A 146-amino-acid polypeptide reads, in one-letter code: Large ribosomal subunit protein uL13 (146 aa).

The protein belongs to the universal ribosomal protein uL13 family. Part of the 50S ribosomal subunit.

Its function is as follows. This protein is one of the early assembly proteins of the 50S ribosomal subunit, although it is not seen to bind rRNA by itself. It is important during the early stages of 50S assembly. The polypeptide is Large ribosomal subunit protein uL13 (Spiroplasma citri).